The sequence spans 120 residues: DNA-binding protein HQ_1105A (120 aa).

The tract at residues 1-55 (MSETPDDLDELRQQRMEELRDQADGQQSQTSDNTAAAQEAAREKAEAQQEALLKQ) is disordered. Positions 10 to 23 (ELRQQRMEELRDQA) are enriched in basic and acidic residues. Residues 24 to 34 (DGQQSQTSDNT) show a composition bias toward polar residues.

It belongs to the PDCD5 family.

The chain is DNA-binding protein HQ_1105A from Haloquadratum walsbyi (strain DSM 16790 / HBSQ001).